The following is a 101-amino-acid chain: Small ribosomal subunit protein uS14 (101 aa).

The segment covering 1-10 (MAKKSSIEKN) has biased composition (basic and acidic residues). The disordered stretch occupies residues 1 to 23 (MAKKSSIEKNNRRKKMTKNAAPK). A compositionally biased stretch (basic residues) spans 11–23 (NRRKKMTKNAAPK).

This sequence belongs to the universal ribosomal protein uS14 family. In terms of assembly, part of the 30S ribosomal subunit. Contacts proteins S3 and S10.

Its function is as follows. Binds 16S rRNA, required for the assembly of 30S particles and may also be responsible for determining the conformation of the 16S rRNA at the A site. This is Small ribosomal subunit protein uS14 from Rhodopseudomonas palustris (strain HaA2).